A 791-amino-acid polypeptide reads, in one-letter code: Organellar oligopeptidase A, chloroplastic/mitochondrial (791 aa).

The transit peptide at 1–82 (MLMATPTSRA…SSPPSMSSAA (82 aa)) directs the protein to the chloroplast and mitochondrion. Coiled coils occupy residues 118 to 138 (RPGIRALLQHLEAELEELEKS) and 239 to 259 (DDEKREEFNKIEQELEKLSHK). Position 571 (His-571) interacts with Zn(2+). Residue Glu-572 is part of the active site. Positions 575 and 601 each coordinate Zn(2+). 703–709 (HIFAGGY) serves as a coordination point for substrate.

This sequence belongs to the peptidase M3 family. It depends on Zn(2+) as a cofactor.

It is found in the mitochondrion matrix. The protein localises to the plastid. It localises to the chloroplast stroma. It carries out the reaction Hydrolysis of oligopeptides, with broad specificity. Gly or Ala commonly occur as P1 or P1' residues, but more distant residues are also important, as is shown by the fact that Z-Gly-Pro-Gly-|-Gly-Pro-Ala is cleaved, but not Z-(Gly)(5).. Inhibited by salicylic acid. Functionally, oligopeptidase degrading short peptides from 8 to 23 amino acid residues. Plays a role in the degradation of transit peptides and of peptides derived from other proteolytic events. Does not exhibit a strict cleavage pattern. Binds salicylic acid. The chain is Organellar oligopeptidase A, chloroplastic/mitochondrial from Arabidopsis thaliana (Mouse-ear cress).